The following is a 365-amino-acid chain: Aminomethyltransferase (365 aa).

It belongs to the GcvT family. In terms of assembly, the glycine cleavage system is composed of four proteins: P, T, L and H.

The catalysed reaction is N(6)-[(R)-S(8)-aminomethyldihydrolipoyl]-L-lysyl-[protein] + (6S)-5,6,7,8-tetrahydrofolate = N(6)-[(R)-dihydrolipoyl]-L-lysyl-[protein] + (6R)-5,10-methylene-5,6,7,8-tetrahydrofolate + NH4(+). Its function is as follows. The glycine cleavage system catalyzes the degradation of glycine. The polypeptide is Aminomethyltransferase (Chlorobaculum tepidum (strain ATCC 49652 / DSM 12025 / NBRC 103806 / TLS) (Chlorobium tepidum)).